Reading from the N-terminus, the 1686-residue chain is MGLASRAPGKGGTSAGALASLFRVALLFFGLWDVQTQTVANTRPTYIWQTGPWGRCMGSECGPGGSQSRAVWCAHSEGWTTLHTNCQQSERPSNQQSCFRVCDWHKELYDWQLGAWNQCVPVSMRNAGVPRPAVCTRGEEGIQTREVGCVHKSDGVPAEDAICEYFEPKPRLEQACLIPCPRDCVVSEFSPWTSCSKSCGMGLQNRLRSVLAPPLFGGSACPNLTEFRTCQPGKCEGVESLHSLRVGPWGQCMASPIRQARDTGEARVPKAERKAKRDRQARQERQGKRRKNKEKKELRESKGERVRERVKEKKRMRDPETRELIKKKRTRNRQNRQGLKFWDLQVGYQTREVTCVHRSGSTASISQCTQQTLPVTYQACVISKDCEVSEWSDWSVCSKECYDLNGRKGQRTRTRQVQQFPVGGGAECPELEESEPCSPQGEGIPPCVVYNWRSTEWSDCRVDVLLSQQDRRRSNQTGLCGGGVQTREVYCVQAPSETSSNLGSLKSKDALRPVNSDLCLGVPHNTTQLCHIPCPVECEVSAWSAWGPCTFENCQDQSTKKGFKLRKRKIMNEPTGGTGNCPHLTEAIPCEEPSCYDWLLVKLEECVPDNDKVCGPGTQNPQVQCINSDGEFVDRQLCRDAILPMPVLCEVSCPKDCVLSPWTSWSLCSNTCSGKNSEGKQTRARSILAYNAGDGGVQCPNSSALQEVRSCNDHPCTVYHWQTGPWGQCIEDTSVPSANSSISRAVPGTAVNDAFCSVGMQTRKVICVRVNVGQVPPKKCPESLRPETVRPCLLPCKRDCVVTPYSDWTPCPSICQTGGSVKKKQSRKRIIIQLPANGGQDCPEVLFQEKDCDASSVCPGYRWKTHKWRRCQLVPWSIRQDSPGAQETCGPGLQARAVSCKKLDSGPADVAACLKFAGPMPQLTQSCQLPCQDDCQLTAWSKFSTCAADCVGVRTRKRTLVGKSKKREQCKNTQMYPLSETQYCPCNKYNAQPVGNWSDCILPEGRVEGLLGMKVQGDIKECGQGYRYQAMVCYDQDNRLVETSRCNSHGYIEEACIIPCPSDCKLSEWSNWSRCSKSCGSGVKVRSKWLREKPYNGGRPCPKLDHVNQAQVYEVVPCLSDCSQYVWVAEPWSVWKVSNVDLKENCGEGVQTRKVRCMQNTVDGPSDPVEDYLCDPEEMPLGARESKLPCPEDCVLTDWGSWSRCPLPCNVNSTRQRSASPIRQPSERKQCPSTTEKEICTLNSNCFHYSYNITDWSTCQLSERAVCGVGFKTRMLDCVRSDSKSVDLKFCEELGLEKKWQMNASCVVECPVNCQLSDWSSWSECSHTCGLAGKLWRRRTVIQASQGDGRPCSSQLEQWKPCPVKPCFSWRYSVWSPCKSEGARCGEGLRFRNVSCFVSDGSGKDAGSMVDEELCGDLEQTVDGDKQIILQESCTVPCPGECYLTDWTMWSPCQLSCIGGDDLGFGSVQVRSRAVLAQEPENLLQCPEQEWEARPCTEGQCYDYKWMTGAWRGSSRQVWCQRSDGLNVTGGCQSTTEPVSDRSCDPACDKPRSICTEAGICGCEEGYTEVMTSDGVLDQCTVIPVLEIPTAGDSKADVKTIRALNPTEPTANMPGRAGRTWFLQPFGPDGKLKTWVYGVAAGAFVLLVFIVSMTYLACKKPKKPQRRQMNNRLKPLTLAYDGDADM.

The first 36 residues, 1-36 (MGLASRAPGKGGTSAGALASLFRVALLFFGLWDVQT), serve as a signal peptide directing secretion. Topologically, residues 37-1635 (QTVANTRPTY…FGPDGKLKTW (1599 aa)) are extracellular. TSP type-1 domains are found at residues 44–103 (PTYI…RVCD), 107–181 (ELYD…IPCP), and 183–236 (DCVV…GKCE). Asn-223 carries N-linked (GlcNAc...) asparagine glycosylation. The segment at 257–321 (IRQARDTGEA…EKKRMRDPET (65 aa)) is disordered. 2 stretches are compositionally biased toward basic and acidic residues: residues 259 to 272 (QARD…PKAE) and 294 to 321 (EKKE…DPET). TSP type-1 domains are found at residues 385–441 (DCEV…SPQG), 448–535 (VVYN…IPCP), 537–596 (ECEV…PSCY), 656–717 (DCVL…HPCT), 718–797 (VYHW…LPCK), 799–859 (DCVV…SVCP), 860–932 (GYRW…LPCQ), 934–985 (DCQL…QYCP), 988–1061 (KYNA…IPCP), 1063–1123 (DCKL…SDCS), 1124–1191 (QYVW…LPCP), 1193–1247 (DCVL…SNCF), 1248–1311 (HYSY…VECP), 1313–1368 (NCQL…KPCF), 1369–1439 (SWRY…VPCP), and 1441–1502 (ECYL…GQCY). 3 disulfides stabilise this stretch: Cys-460/Cys-530, Cys-480/Cys-534, and Cys-491/Cys-519. N-linked (GlcNAc...) asparagine glycosylation occurs at Asn-475. The N-linked (GlcNAc...) asparagine glycan is linked to Asn-525. Cystine bridges form between Cys-657-Cys-699 and Cys-668-Cys-672. Asn-701 carries an N-linked (GlcNAc...) asparagine glycan. Intrachain disulfides connect Cys-711–Cys-716, Cys-729–Cys-792, Cys-756–Cys-796, Cys-767–Cys-780, Cys-800–Cys-842, Cys-811–Cys-815, and Cys-852–Cys-858. Asn-739 carries an N-linked (GlcNAc...) asparagine glycan. N-linked (GlcNAc...) asparagine glycosylation is present at Asn-996. Disulfide bonds link Cys-1000-Cys-1056, Cys-1022-Cys-1060, Cys-1033-Cys-1046, Cys-1064-Cys-1101, Cys-1075-Cys-1079, and Cys-1118-Cys-1122. Residue Asn-1071 is glycosylated (N-linked (GlcNAc...) asparagine). Asn-1212 is a glycosylation site (N-linked (GlcNAc...) asparagine). Cys-1240 and Cys-1246 are joined by a disulfide. Asn-1252 carries an N-linked (GlcNAc...) asparagine glycan. 12 disulfides stabilise this stretch: Cys-1259–Cys-1306, Cys-1267–Cys-1310, Cys-1278–Cys-1291, Cys-1314–Cys-1352, Cys-1325–Cys-1329, Cys-1362–Cys-1367, Cys-1378–Cys-1434, Cys-1385–Cys-1438, Cys-1396–Cys-1415, Cys-1442–Cys-1486, Cys-1453–Cys-1457, and Cys-1496–Cys-1501. N-linked (GlcNAc...) asparagine glycosylation occurs at Asn-1303. Asn-1393 is a glycosylation site (N-linked (GlcNAc...) asparagine). A glycan (N-linked (GlcNAc...) asparagine) is linked at Asn-1527. The helical transmembrane segment at 1636-1656 (VYGVAAGAFVLLVFIVSMTYL) threads the bilayer. Residues 1657–1686 (ACKKPKKPQRRQMNNRLKPLTLAYDGDADM) lie on the Cytoplasmic side of the membrane.

In terms of processing, extensively N-glycosylated.

It is found in the cell membrane. It localises to the cell projection. In terms of biological role, required for normal sprouting angiogenesis and normal embryonic development of intersegmental vessels (ISV). Required for normal function of the glomerular filtration barrier. Required for normal axon outgrowth on embryonic motor neurons at the level of the horizontal myoseptum. Required for normal expression of notch1b, suggesting that its functions in angiogenesis and neuron outgrowth are due to decreased expression of notch1b. Plays a role in actin cytoskeleton rearrangement. The sequence is that of Thrombospondin type-1 domain-containing protein 7A from Danio rerio (Zebrafish).